A 288-amino-acid chain; its full sequence is Polyprenyl transferase eriF (288 aa).

6 consecutive transmembrane segments (helical) span residues 24 to 44, 51 to 71, 101 to 121, 145 to 165, 215 to 235, and 268 to 288; these read ASII…TLPL, YIFL…LNQV, IAAF…LPET, CIAM…AISP, FIIT…GGIF, and FYTY…HGLI.

This sequence belongs to the UbiA prenyltransferase family. It depends on Mg(2+) as a cofactor.

It localises to the membrane. In terms of biological role, polyprenyl transferase; part of the gene cluster that mediates the biosynthesis of erinacines, cyathane-xylosides that show unique biological activities, including leishmanicidal activity, stimulating activity for nerve growth-factor synthesis, and agonistic activity toward the kappa opioid receptor. The role of eriF within the pathway has still to be determined. The first step of the erinacines biosynthesis pathway is catalyzed by the geranylgeranyl diphosphate (GGPP) synthase eriE via conversion of farnesyl pyrophosphate and isopentyl pyrophosphate into geranylgeranyl pyrophosphate (GGPP). GGPP is then substrate of the diterpene cyclase eriG for the production of cyatha-3,12-diene. The cytochrome P450 monooxygenase eriI then hydroxylates cyatha-3,12-diene at C-14 of the seven-membered ring to produce erinacol, which is further hydroxylated at C-15 by the cytochrome P450 monooxygenase eriC to yield cyathadiol. The cytochrome P450 monooxygenase eriA then catalyzes C-11 hydroxylation in the presence of the short chain dehydrogenase/reductase (SDR) eriH, which leads to the production of cyathatriol. The acetyltransferase eriL converts cyathatriol into 11-O-acetyl-cyathatriol. The SDR eriH catalyzes further oxidation of 11-O-acetyl-cyathatriol into 1-O-acetylcyathin A3. Finally, the glycosyl transferase eriJ tranfers xylose from UDP-xylose onto C-14 of 11-O-acetyl-cyathatriol to form eracine Q. EriJ is also able to convert 11-O-acetyl-cyathatriol to eracine Q2 by using UDP-D-glucose as cosubstrate, but at a lower rate. In Hericium erinaceus (Lion's mane mushroom), this protein is Polyprenyl transferase eriF.